Reading from the N-terminus, the 467-residue chain is Mitochondrial adenyl nucleotide antiporter SLC25A23 (467 aa).

A regulatory N-terminal domain region spans residues 1 to 148 (MRGGSSDAER…DHFLLHSLEN (148 aa)). Residues 1 to 187 (MRGGSSDAER…EKLTGMWWKQ (187 aa)) are Mitochondrial intermembrane-facing. EF-hand domains lie at 9 to 44 (ERRQ…LGRG), 76 to 111 (EREQ…LGIS), and 112 to 147 (ISLE…HSLE). Ca(2+) is bound by residues Asp-22, Asn-24, Asp-26, Arg-28, and Glu-33. The segment at 39–61 (ARLGRGDPDRAQQGVSSDWDADP) is disordered. The Ca(2+) site is built by Asp-89, Asn-91, Asp-93, His-95, and Glu-100. The segment at 149–158 (VEDVLYFWKH) is linker region. The tract at residues 164-467 (IGECLTVPDE…MKQALGVTSR (304 aa)) is C-terminal transmembrane transporter domain. Solcar repeat units follow at residues 182 to 268 (GMWW…IKRA), 276 to 361 (LHVQ…LKNR), and 373 to 461 (PGIL…MKQA). The helical transmembrane segment at 188-205 (LVAGAVAGAVSRTGTAPL) threads the bilayer. Over 206–242 (DRLKVFMQVHASKSNRLNILGGLRNMIQEGGVLSLWR) the chain is Mitochondrial matrix. A helical membrane pass occupies residues 243-262 (GNGINVLKIAPESAIKFMAY). Over 263–285 (EQIKRAIRGQQETLHVQERFVAG) the chain is Mitochondrial intermembrane. A helical transmembrane segment spans residues 286–299 (SLAGATAQTIIYPM). Topologically, residues 300–335 (EVLKTRLTLRRTGQYKGLLDCAKRILEREGPRAFYR) are mitochondrial matrix. Residues 336 to 355 (GYLPNVLGIIPYAGIDLAVY) form a helical membrane-spanning segment. Residues 356–378 (ETLKNRWLQQYSHESANPGILVL) are Mitochondrial intermembrane-facing. A helical membrane pass occupies residues 379–396 (LGCGTISSTCGQIASYPL). The Mitochondrial matrix segment spans residues 397–435 (ALVRTRMQAQASIEGGPQVSMVGLLRHILSQEGVWGLYR). The helical transmembrane segment at 436–455 (GIAPNFMKVIPAVSISYVVY) threads the bilayer. Residues 456–467 (ENMKQALGVTSR) are Mitochondrial intermembrane-facing.

It belongs to the mitochondrial carrier (TC 2.A.29) family. In terms of assembly, interacts with MCU. Interacts with MICU1.

Its subcellular location is the mitochondrion inner membrane. The enzyme catalyses Mg(2+)(out) + phosphate(in) + ATP(out) = Mg(2+)(in) + phosphate(out) + ATP(in). It catalyses the reaction ADP(out) + phosphate(in) + H(+)(out) = ADP(in) + phosphate(out) + H(+)(in). It carries out the reaction AMP(out) + phosphate(in) = AMP(in) + phosphate(out). The catalysed reaction is phosphate(in) + ATP(out) + 2 H(+)(out) = phosphate(out) + ATP(in) + 2 H(+)(in). The enzyme catalyses dADP(in) + ADP(out) = dADP(out) + ADP(in). It catalyses the reaction Mg(2+)(in) + ADP(out) + ATP(in) + H(+)(out) = Mg(2+)(out) + ADP(in) + ATP(out) + H(+)(in). It carries out the reaction ADP(out) + diphosphate(in) = ADP(in) + diphosphate(out). The catalysed reaction is dAMP(in) + ADP(out) + H(+)(out) = dAMP(out) + ADP(in) + H(+)(in). The enzyme catalyses 3'-AMP(in) + ADP(out) + H(+)(out) = 3'-AMP(out) + ADP(in) + H(+)(in). It catalyses the reaction dAMP(out) + phosphate(in) = dAMP(in) + phosphate(out). It carries out the reaction 3'-AMP(out) + phosphate(in) = 3'-AMP(in) + phosphate(out). The catalysed reaction is dADP(out) + phosphate(in) + H(+)(out) = dADP(in) + phosphate(out) + H(+)(in). With respect to regulation, activated by an increase in cytosolic calcium levels that induce a conformational change of the N-terminal regulatory domain, uncapping the channel and allowing transport. Electroneutral antiporter that mediates the transport of adenine nucleotides through the inner mitochondrial membrane. Originally identified as an ATP-magnesium/inorganic phosphate antiporter, it also acts as a broad specificity adenyl nucleotide antiporter. By regulating the mitochondrial matrix adenine nucleotide pool could adapt to changing cellular energetic demands and indirectly regulate adenine nucleotide-dependent metabolic pathways. Also acts as a regulator of mitochondrial calcium uptake and can probably transport trace amounts of other divalent metal cations in complex with ATP. In vitro, a low activity is also observed with guanyl and pyrimidine nucleotides. The sequence is that of Mitochondrial adenyl nucleotide antiporter SLC25A23 from Mus musculus (Mouse).